Here is a 160-residue protein sequence, read N- to C-terminus: S-ribosylhomocysteine lyase (160 aa).

Residues H57, H61, and C127 each contribute to the Fe cation site.

Belongs to the LuxS family. In terms of assembly, homodimer. It depends on Fe cation as a cofactor.

It catalyses the reaction S-(5-deoxy-D-ribos-5-yl)-L-homocysteine = (S)-4,5-dihydroxypentane-2,3-dione + L-homocysteine. Functionally, involved in the synthesis of autoinducer 2 (AI-2) which is secreted by bacteria and is used to communicate both the cell density and the metabolic potential of the environment. The regulation of gene expression in response to changes in cell density is called quorum sensing. Catalyzes the transformation of S-ribosylhomocysteine (RHC) to homocysteine (HC) and 4,5-dihydroxy-2,3-pentadione (DPD). This Streptococcus thermophilus (strain CNRZ 1066) protein is S-ribosylhomocysteine lyase.